The chain runs to 299 residues: Small ribosomal subunit protein uS2 (299 aa).

Positions 210–299 (AEKEEQTQVV…GAATDNSWAS (90 aa)) are disordered. Polar residues predominate over residues 275-285 (WASTGTATVGP).

It belongs to the universal ribosomal protein uS2 family. In terms of assembly, component of the small ribosomal subunit. Mature ribosomes consist of a small (40S) and a large (60S) subunit. The 40S subunit contains about 33 different proteins and 1 molecule of RNA (18S). The 60S subunit contains about 49 different proteins and 3 molecules of RNA (28S, 5.8S and 5S). Interacts with ribosomal protein S21.

It is found in the cytoplasm. Functionally, required for the assembly and/or stability of the 40S ribosomal subunit. Required for the processing of the 20S rRNA-precursor to mature 18S rRNA in a late step of the maturation of 40S ribosomal subunits. This chain is Small ribosomal subunit protein uS2, found in Ornithodoros parkeri (Soft tick).